The sequence spans 63 residues: Large ribosomal subunit protein uL30 (63 aa).

Belongs to the universal ribosomal protein uL30 family. In terms of assembly, part of the 50S ribosomal subunit.

The polypeptide is Large ribosomal subunit protein uL30 (Rickettsia canadensis (strain McKiel)).